The chain runs to 237 residues: Uridylate kinase (237 aa).

Residue Lys12 to Gly15 coordinates ATP. An involved in allosteric activation by GTP region spans residues Gly20 to Gly25. Gly54 is a binding site for UMP. ATP is bound by residues Gly55 and Arg59. UMP-binding positions include Asp74 and Thr135 to Thr142. Residues Thr162, Tyr168, and Asp171 each coordinate ATP.

This sequence belongs to the UMP kinase family. Homohexamer.

Its subcellular location is the cytoplasm. It carries out the reaction UMP + ATP = UDP + ADP. It functions in the pathway pyrimidine metabolism; CTP biosynthesis via de novo pathway; UDP from UMP (UMPK route): step 1/1. Allosterically activated by GTP. Inhibited by UTP. Its function is as follows. Catalyzes the reversible phosphorylation of UMP to UDP. This is Uridylate kinase (pyrH) from Haemophilus influenzae (strain ATCC 51907 / DSM 11121 / KW20 / Rd).